Here is a 120-residue protein sequence, read N- to C-terminus: Large ribosomal subunit protein uL18 (120 aa).

The protein belongs to the universal ribosomal protein uL18 family. As to quaternary structure, part of the 50S ribosomal subunit; part of the 5S rRNA/L5/L18/L25 subcomplex. Contacts the 5S and 23S rRNAs.

This is one of the proteins that bind and probably mediate the attachment of the 5S RNA into the large ribosomal subunit, where it forms part of the central protuberance. This is Large ribosomal subunit protein uL18 from Chloroherpeton thalassium (strain ATCC 35110 / GB-78).